A 249-amino-acid polypeptide reads, in one-letter code: 5'-nucleotidase SurE (249 aa).

4 residues coordinate a divalent metal cation: Asp8, Asp9, Ser39, and Asn91.

It belongs to the SurE nucleotidase family. A divalent metal cation is required as a cofactor.

It is found in the cytoplasm. It catalyses the reaction a ribonucleoside 5'-phosphate + H2O = a ribonucleoside + phosphate. In terms of biological role, nucleotidase that shows phosphatase activity on nucleoside 5'-monophosphates. The sequence is that of 5'-nucleotidase SurE from Pseudomonas paraeruginosa (strain DSM 24068 / PA7) (Pseudomonas aeruginosa (strain PA7)).